The chain runs to 144 residues: Large ribosomal subunit protein uL16 (144 aa).

Positions 1 to 19 (MLLPKRVKYRRQHRPKTTG) are enriched in basic residues. Residues 1–23 (MLLPKRVKYRRQHRPKTTGRSKG) form a disordered region.

Belongs to the universal ribosomal protein uL16 family. As to quaternary structure, part of the 50S ribosomal subunit.

Binds 23S rRNA and is also seen to make contacts with the A and possibly P site tRNAs. This is Large ribosomal subunit protein uL16 from Staphylococcus haemolyticus (strain JCSC1435).